Here is a 222-residue protein sequence, read N- to C-terminus: Large ribosomal subunit protein mL64 (222 aa).

2 disordered regions span residues 19–46 and 188–222; these read APGS…EDLL and KRLK…APSS. Basic residues predominate over residues 25–36; sequence YRARPPPRRRPG. Positions 99–212 form a coiled coil; that stretch reads MQESLRVKQL…AAALAAAVAQ (114 aa). The short motif at 184–200 is the Nuclear localization signal element; the sequence is KKERKRLKEEKQKRKKE. Over residues 203–212 the composition is skewed to low complexity; sequence AAALAAAVAQ.

It belongs to the mitochondrion-specific ribosomal protein mL64 family. In terms of assembly, component of the mitochondrial large ribosomal subunit (mt-LSU). Mature mammalian 55S mitochondrial ribosomes consist of a small (28S) and a large (39S) subunit. The 28S small subunit contains a 12S ribosomal RNA (12S mt-rRNA) and 30 different proteins. The 39S large subunit contains a 16S rRNA (16S mt-rRNA), a copy of mitochondrial valine transfer RNA (mt-tRNA(Val)), which plays an integral structural role, and 52 different proteins. Interacts with GADD45A, GADD45B and GADD45G. Interacts with NR4A1 via the NR4A1 AB domain. Interacts with ATAD3A and ATAD3B. As to quaternary structure, (Microbial infection) Interacts with the human papilloma virus type 16 (HPV 16) minor capsid protein L2. As to expression, widely expressed. Highly expressed in the thyroid gland, heart, lymph nodes, trachea and adrenal tissues. Expressed at lower level in liver skeletal muscle, kidney, pancreas, testis, ovary and stomach. Barely detectable in adrenal adenoma and papillary thyroid cancer.

Its subcellular location is the mitochondrion. The protein localises to the nucleus. Acts as a negative regulator of G1 to S cell cycle phase progression by inhibiting cyclin-dependent kinases. Inhibitory effects are additive with GADD45 proteins but also occur in the absence of GADD45 proteins. Acts as a repressor of the orphan nuclear receptor NR4A1 by inhibiting AB domain-mediated transcriptional activity. May be involved in the hormone-mediated regulation of NR4A1 transcriptional activity. May play a role in mitochondrial protein synthesis. This Homo sapiens (Human) protein is Large ribosomal subunit protein mL64 (GADD45GIP1).